Consider the following 122-residue polypeptide: Large ribosomal subunit protein uL18 (122 aa).

A compositionally biased stretch (basic residues) spans 1-16 (MFKKVDRKASRQKKQM). A disordered region spans residues 1-29 (MFKKVDRKASRQKKQMSIRNKISGTPERP).

Belongs to the universal ribosomal protein uL18 family. As to quaternary structure, part of the 50S ribosomal subunit; part of the 5S rRNA/L5/L18/L25 subcomplex. Contacts the 5S and 23S rRNAs.

Its function is as follows. This is one of the proteins that bind and probably mediate the attachment of the 5S RNA into the large ribosomal subunit, where it forms part of the central protuberance. This Fusobacterium nucleatum subsp. nucleatum (strain ATCC 25586 / DSM 15643 / BCRC 10681 / CIP 101130 / JCM 8532 / KCTC 2640 / LMG 13131 / VPI 4355) protein is Large ribosomal subunit protein uL18.